Here is a 438-residue protein sequence, read N- to C-terminus: Adenylosuccinate synthetase (438 aa).

Residues 13 to 19 (GDEGKGK) and 41 to 43 (GHT) contribute to the GTP site. Asp14 serves as the catalytic Proton acceptor. Residues Asp14 and Gly41 each contribute to the Mg(2+) site. Residues 14–17 (DEGK), 39–42 (NAGH), Thr136, Arg150, Gln231, Thr246, and Arg310 contribute to the IMP site. His42 acts as the Proton donor in catalysis. 306–312 (STTGRRR) is a binding site for substrate. Residues Arg312, 338–340 (KID), and 421–423 (STG) contribute to the GTP site.

The protein belongs to the adenylosuccinate synthetase family. In terms of assembly, homodimer. The cofactor is Mg(2+).

It is found in the cytoplasm. The catalysed reaction is IMP + L-aspartate + GTP = N(6)-(1,2-dicarboxyethyl)-AMP + GDP + phosphate + 2 H(+). Its pathway is purine metabolism; AMP biosynthesis via de novo pathway; AMP from IMP: step 1/2. Plays an important role in the de novo pathway of purine nucleotide biosynthesis. Catalyzes the first committed step in the biosynthesis of AMP from IMP. The sequence is that of Adenylosuccinate synthetase from Blochmanniella floridana.